The following is a 485-amino-acid chain: Glutamate--tRNA ligase (485 aa).

The short motif at 11 to 21 (PSPTGHLHIGN) is the 'HIGH' region element. The 'KMSKS' region signature appears at 252 to 256 (KLSKR). ATP is bound at residue K255.

This sequence belongs to the class-I aminoacyl-tRNA synthetase family. Glutamate--tRNA ligase type 1 subfamily. Monomer.

The protein localises to the cytoplasm. It catalyses the reaction tRNA(Glu) + L-glutamate + ATP = L-glutamyl-tRNA(Glu) + AMP + diphosphate. Catalyzes the attachment of glutamate to tRNA(Glu) in a two-step reaction: glutamate is first activated by ATP to form Glu-AMP and then transferred to the acceptor end of tRNA(Glu). The polypeptide is Glutamate--tRNA ligase (Bacillus thuringiensis (strain Al Hakam)).